The following is a 205-amino-acid chain: Type III pantothenate kinase (205 aa).

5-12 (DIGNTTYH) lines the ATP pocket. Residues Tyr-68 and 72 to 75 (GIDR) each bind substrate. Catalysis depends on Asp-74, which acts as the Proton acceptor. Asp-89 lines the K(+) pocket. Ser-92 lines the ATP pocket. Ser-144 contributes to the substrate binding site.

The protein belongs to the type III pantothenate kinase family. Homodimer. NH4(+) serves as cofactor. It depends on K(+) as a cofactor.

It is found in the cytoplasm. The enzyme catalyses (R)-pantothenate + ATP = (R)-4'-phosphopantothenate + ADP + H(+). It participates in cofactor biosynthesis; coenzyme A biosynthesis; CoA from (R)-pantothenate: step 1/5. In terms of biological role, catalyzes the phosphorylation of pantothenate (Pan), the first step in CoA biosynthesis. The sequence is that of Type III pantothenate kinase from Sulfurimonas denitrificans (strain ATCC 33889 / DSM 1251) (Thiomicrospira denitrificans (strain ATCC 33889 / DSM 1251)).